The following is a 416-amino-acid chain: Maltoporin (416 aa).

The signal sequence occupies residues 1-26 (MELTMKKVSVIAAAVAATLAAGSAFA).

Belongs to the porin LamB (TC 1.B.3) family. In terms of assembly, homotrimer formed of three 18-stranded antiparallel beta-barrels, containing three independent channels.

It is found in the cell outer membrane. It carries out the reaction beta-maltose(in) = beta-maltose(out). Functionally, involved in the transport of maltose and maltodextrins. The chain is Maltoporin from Vibrio cholerae serotype O1 (strain ATCC 39541 / Classical Ogawa 395 / O395).